A 224-amino-acid chain; its full sequence is MQVKVIDENSNTTAVLNCAKAKTRALAWLCDTVLLAILLAIIYGISSIFIKEQSSVFLIMTVSQAVLWLTYFVILPGLWKGKTLFRALLGLSLLIFKKRFWNLLVHELFLWVWYSVIFLALAIYFFVNRDDPKILQAFFDNQNSNLSWIFVKILLSVISVLQLVFVVYFCFSSQKQALQDLLSKSFMVQKAIKVKDCKSELKSTNTIKTHSDLPGDIDLEQLGD.

Transmembrane regions (helical) follow at residues 25-45 (ALAWLCDTVLLAILLAIIYGI), 56-76 (VFLIMTVSQAVLWLTYFVILP), 107-127 (ELFLWVWYSVIFLALAIYFFV), and 149-169 (IFVKILLSVISVLQLVFVVYF).

The protein resides in the cell membrane. This is an uncharacterized protein from Mycoplasma pneumoniae (strain ATCC 29342 / M129 / Subtype 1) (Mycoplasmoides pneumoniae).